The following is a 102-amino-acid chain: 10 kDa heat shock protein, mitochondrial (102 aa).

Belongs to the GroES chaperonin family. Homohexamer.

It is found in the mitochondrion matrix. Eukaryotic CPN10 homolog which is essential for mitochondrial protein biogenesis, together with CPN60. Binds to CPN60 in the presence of Mg-ATP and suppresses the ATPase activity of the latter. The polypeptide is 10 kDa heat shock protein, mitochondrial (Schistosoma japonicum (Blood fluke)).